The sequence spans 379 residues: Glutamate 5-kinase (379 aa).

Lys-20 serves as a coordination point for ATP. Ser-59, Asp-146, and Asn-158 together coordinate substrate. Position 220-226 (220-226 (SGGMYSK)) interacts with ATP. The PUA domain occupies 285–362 (TGSVVVDDGA…AELTAILGDN (78 aa)).

It belongs to the glutamate 5-kinase family.

Its subcellular location is the cytoplasm. The catalysed reaction is L-glutamate + ATP = L-glutamyl 5-phosphate + ADP. It functions in the pathway amino-acid biosynthesis; L-proline biosynthesis; L-glutamate 5-semialdehyde from L-glutamate: step 1/2. Catalyzes the transfer of a phosphate group to glutamate to form L-glutamate 5-phosphate. The protein is Glutamate 5-kinase of Oleidesulfovibrio alaskensis (strain ATCC BAA-1058 / DSM 17464 / G20) (Desulfovibrio alaskensis).